The primary structure comprises 224 residues: Attacin-A (224 aa).

The first 20 residues, 1 to 20 (MQKTSILIVALVALFAITEA), serve as a signal peptide directing secretion. Residues 21 to 34 (LPSLPTTGPIRVRR) constitute a propeptide that is removed on maturation.

It belongs to the attacin/sarcotoxin-2 family. As to expression, hemolymph (at protein level).

The protein localises to the secreted. In terms of biological role, hemolymph antibacterial protein. This Drosophila melanogaster (Fruit fly) protein is Attacin-A (AttA).